The primary structure comprises 136 residues: uncharacterized protein (136 aa).

An N-terminal signal peptide occupies residues 1-35; it reads MTHRAVPCQPRAFSKIKVLVISFLFLMVAFLPFSS.

This is an uncharacterized protein from Saccharomyces cerevisiae (strain ATCC 204508 / S288c) (Baker's yeast).